Here is a 1170-residue protein sequence, read N- to C-terminus: DNA excision repair protein ERCC-5 (1170 aa).

An N-domain region spans residues 1–78; the sequence is MGVQGLWKLL…RIRPIFVFDG (78 aa). At K8 the chain carries N6-acetyllysine. D30 is a binding site for Mg(2+). Positions 31 to 67 are DNA-binding; may bind to the undamaged single-strand DNA of the DNA repair bubble; the sequence is ISIWLNQALKGVRDSHGNVIENAHLLTLFHRLCKLLF. Residue D77 coordinates Mg(2+). The tract at residues 79–784 is spacer region; that stretch reads DAPLLKKQTL…LRLFGVPYIQ (706 aa). Disordered stretches follow at residues 304–479, 520–587, and 600–701; these read DSES…RCDT, HVSG…PKAC, and LENA…ECLL. Over residues 306–323 the composition is skewed to low complexity; that stretch reads ESLPSSSNVHSVSSNLKS. 2 stretches are compositionally biased toward basic and acidic residues: residues 324–336 and 363–373; these read SPHE…REPE and SREGRQSKERN. At S384 the chain carries Phosphoserine. The span at 455-474 shows a compositional bias: polar residues; that stretch reads TSGSSANGQTDSAHSFTTAS. Basic and acidic residues predominate over residues 539 to 551; it reads THSDQGIDIHPED. Residues 659–676 are compositionally biased toward polar residues; the sequence is SVVSNSELQTESSEASTH. Over residues 677-698 the composition is skewed to basic and acidic residues; sequence LSEKDAEEPRETLEEGTSRDTE. 2 positions are modified to phosphoserine: S704 and S705. Residues 785–880 are I-domain; the sequence is APMEAEAQCA…VTAMEILNEF (96 aa). Mg(2+) is bound by residues E788, E790, D809, and D811. Residues 819-835 are DNA-binding; may bind to the undamaged single-strand DNA of the DNA repair bubble; that stretch reads HVYKNFFNKNKFVEYYQ. The tract at residues 847-879 is DNA-binding; H2TH (helix-2turn-helix) motif which binds double-stranded DNA; it reads RNKLINLAYLLGSDYTEGIPTVGCVTAMEILNE. D860 is a binding site for Mg(2+). Residues 911–917 are DNA-binding; may bind double-stranded DNA; that stretch reads TKVKKKL. The tract at residues 980-1008 is interaction with PCNA; the sequence is LKHLNAHQTQLRIDSFFRLAQQEKQDAKL. The interaction with ERCC6/CSB stretch occupies residues 1010-1170; the sequence is KSHRLNRAVT…KSMKRRKKKT (161 aa). The segment at 1033–1146 is disordered; the sequence is LTKVTEALDD…DDEDKAKTVL (114 aa). The segment covering 1041–1060 has biased composition (basic and acidic residues); that stretch reads DDAKGKTQKRELPYKKETSV. The Nuclear localization signal 1 motif lies at 1049–1065; it reads KRELPYKKETSVPKRRR. Over residues 1094–1110 the composition is skewed to polar residues; that stretch reads SVMSARQRSAAESSKIS. Residues 1153–1170 carry the Nuclear localization signal 2 motif; the sequence is FGKKKLKLKSMKRRKKKT.

It belongs to the XPG/RAD2 endonuclease family. XPG subfamily. In terms of assembly, monomer. Homodimer. Component of the homologous recombination repair (HR) complex composed of ERCC5/XPG, BRCA2, PALB2, DSS1 and RAD51. Within the complex, interacts with BRCA2 and PALB2. Interacts with RNA polymerase II. Interacts (via C-terminus) with ERCC6/CSB; the interaction stimulates ERCC6/CSB binding to the DNA repair bubble and ERCC6/CSB ATPase activity. May form a complex composed of RNA polymerase II, ERCC6/CSB and ERCC5/XPG which associates with the DNA repair bubble during transcription-coupled nucleotide excision repair. Interacts with BRCA1; the interaction promotes the release of BRCA1 from DNA. Interacts with PCNA. Interacts with NTHL1; the interaction stimulates NTHL1 activity and NTHL1 binding to its DNA substrate. The cofactor is Mg(2+).

Its subcellular location is the nucleus. The protein localises to the chromosome. Functionally, single-stranded structure-specific DNA endonuclease involved in DNA excision repair. Makes the 3'incision in DNA nucleotide excision repair (NER). Binds and bends DNA repair bubble substrate and breaks base stacking at the single-strand/double-strand DNA junction of the DNA bubble. Plays a role in base excision repair (BER) by promoting the binding of DNA glycosylase NTHL1 to its substrate and increasing NTHL1 catalytic activity that removes oxidized pyrimidines from DNA. Involved in transcription-coupled nucleotide excision repair (TCR) which allows RNA polymerase II-blocking lesions to be rapidly removed from the transcribed strand of active genes. Functions during the initial step of TCR in cooperation with ERCC6/CSB to recognized stalled RNA polymerase II. Also, stimulates ERCC6/CSB binding to the DNA repair bubble and ERCC6/CSB ATPase activity. Required for DNA replication fork maintenance and preservation of genomic stability. Involved in homologous recombination repair (HRR) induced by DNA replication stress by recruiting RAD51, BRCA2, and PALB2 to the damaged DNA site. During HRR, binds to the replication fork with high specificity and stabilizes it. Also, acts upstream of HRR, to promote the release of BRCA1 from DNA. The chain is DNA excision repair protein ERCC-5 (Ercc5) from Mus musculus (Mouse).